Reading from the N-terminus, the 292-residue chain is Probable deoxyhypusine synthase (292 aa).

Residue lysine 267 is the Nucleophile of the active site.

This sequence belongs to the deoxyhypusine synthase family. Requires NAD(+) as cofactor.

It catalyses the reaction [eIF5A protein]-L-lysine + spermidine = [eIF5A protein]-deoxyhypusine + propane-1,3-diamine. Its pathway is protein modification; eIF5A hypusination. Catalyzes the NAD-dependent oxidative cleavage of spermidine and the subsequent transfer of the butylamine moiety of spermidine to the epsilon-amino group of a specific lysine residue of the eIF-5A precursor protein to form the intermediate deoxyhypusine residue. This Pyrobaculum aerophilum (strain ATCC 51768 / DSM 7523 / JCM 9630 / CIP 104966 / NBRC 100827 / IM2) protein is Probable deoxyhypusine synthase (dys).